A 273-amino-acid polypeptide reads, in one-letter code: NH(3)-dependent NAD(+) synthetase (273 aa).

47–54 (GISGGQDS) contacts ATP. Asp-53 provides a ligand contact to Mg(2+). Arg-139 contributes to the deamido-NAD(+) binding site. Position 159 (Thr-159) interacts with ATP. Glu-164 is a binding site for Mg(2+). Residues Lys-172 and Asp-179 each coordinate deamido-NAD(+). ATP is bound by residues Lys-188 and Thr-210. Position 259–260 (259–260 (HK)) interacts with deamido-NAD(+).

This sequence belongs to the NAD synthetase family. Homodimer.

The catalysed reaction is deamido-NAD(+) + NH4(+) + ATP = AMP + diphosphate + NAD(+) + H(+). It participates in cofactor biosynthesis; NAD(+) biosynthesis; NAD(+) from deamido-NAD(+) (ammonia route): step 1/1. Functionally, catalyzes the ATP-dependent amidation of deamido-NAD to form NAD. Uses ammonia as a nitrogen source. The polypeptide is NH(3)-dependent NAD(+) synthetase (Staphylococcus haemolyticus (strain JCSC1435)).